The chain runs to 714 residues: Mitochondrial potassium channel ATP-binding subunit (714 aa).

Residues 1–25 (MLVHLFRVGIRGGPVPRWSLQSLRF) constitute a mitochondrion transit peptide. The next 4 membrane-spanning stretches (helical) occupy residues 127 to 147 (LLAL…NVQI), 178 to 198 (IQLL…LVLL), 278 to 298 (LMLA…GSGL), and 365 to 385 (NIAF…LVAG). In terms of domain architecture, ABC transmembrane type-1 spans 132–419 (LAIVLALGAA…LSVLFGQVVR (288 aa)). Residues 454 to 691 (ITFQNVSFSY…GGLYAELIRR (238 aa)) form the ABC transporter domain. 489–496 (GQSGGGKT) contacts ATP.

This sequence belongs to the ABC transporter superfamily. ABCB family. Multidrug resistance exporter (TC 3.A.1.201) subfamily. The mitochondrial potassium channel (mitoK(ATP)) is composed of 4 subunits of CCDC51/MITOK and 4 subunits of ABCB8/MITOSUR. Physically interacts with PAAT. Interacts with Neuropilin-1 (NRP1) in mitochondria. Strong expression is found in the heart, brain and testis. In the testis, expressed both in the somatic Sertoli cells and peritubular cells and in the germline (spermatogonia and pachytene spermatocytes). Also expressed in the lung, liver, intestine and kidney.

The protein localises to the mitochondrion inner membrane. Its activity is regulated as follows. Channel activity inhibited by ATP via ABCB8/MITOSUR subunit. In terms of biological role, ATP-binding subunit of the mitochondrial ATP-gated potassium channel (mitoK(ATP)). v. An increase in ATP intracellular levels closes the channel, inhibiting K(+) transport, whereas a decrease in ATP levels enhances K(+) uptake in the mitochondrial matrix. Plays a role in mitochondrial iron transport. Required for maintenance of normal cardiac function, possibly by influencing mitochondrial iron export and regulating the maturation of cytosolic iron sulfur cluster-containing enzymes. This Rattus norvegicus (Rat) protein is Mitochondrial potassium channel ATP-binding subunit.